The following is a 196-amino-acid chain: Small ribosomal subunit protein uS4c (196 aa).

A disordered region spans residues 15–42; the sequence is LGALPGLTRKTPKSGSNQKKKFNSGKKE. Residues 89-150 enclose the S4 RNA-binding domain; sequence MRLDNILFRL…NQRSKRLVQN (62 aa).

Belongs to the universal ribosomal protein uS4 family. As to quaternary structure, part of the 30S ribosomal subunit. Contacts protein S5. The interaction surface between S4 and S5 is involved in control of translational fidelity.

It is found in the plastid. The protein resides in the chloroplast. Functionally, one of the primary rRNA binding proteins, it binds directly to 16S rRNA where it nucleates assembly of the body of the 30S subunit. With S5 and S12 plays an important role in translational accuracy. The sequence is that of Small ribosomal subunit protein uS4c (rps4) from Cenchrus longisetus (Feathertop).